A 123-amino-acid chain; its full sequence is Large ribosomal subunit protein bL12 (123 aa).

Belongs to the bacterial ribosomal protein bL12 family. In terms of assembly, homodimer. Part of the ribosomal stalk of the 50S ribosomal subunit. Forms a multimeric L10(L12)X complex, where L10 forms an elongated spine to which 2 to 4 L12 dimers bind in a sequential fashion. Binds GTP-bound translation factors.

Forms part of the ribosomal stalk which helps the ribosome interact with GTP-bound translation factors. Is thus essential for accurate translation. This is Large ribosomal subunit protein bL12 from Chromobacterium violaceum (strain ATCC 12472 / DSM 30191 / JCM 1249 / CCUG 213 / NBRC 12614 / NCIMB 9131 / NCTC 9757 / MK).